The sequence spans 404 residues: MSYSCGLPSLSCRTSCSSRPCVPPSCHGCTLPGACNIPANVSNCNWFCEGSFNGSEKETMQFLNDRLASYLEKVRQLERDNAELENLIRERSQQQEPLVCASYQSYFKTIEELQQKILCSKSENARLVVQIDNAKLASDDFRTKYETELSLRQLVESDINGLRRILDELTLCRSDLEAQVESLKEELLCLKQNHEQEVNTLRCQLGDRLNVEVDAAPTVDLNQVLNETRSQYEALVETNRREVEQWFATQTEELNKQVVSSSEQLQSYQAEIIELRRTVNALEIELQAQHNLRDSLENTLTESEARYSSQLSQVQRLITNVESQLAEIRSDLERQNQEYQVLLDVRARLECEINTYRSLLESEDCKLPSNPCATTNACDKSTGPCISNPCGLRARCGPCNTFGY.

Residues Met1–Glu56 form a head region. The region spanning Glu56 to Leu367 is the IF rod domain. Residues Lys57 to Arg91 are coil 1A. The segment at Ser92–Ser102 is linker 1. The tract at residues Tyr103–Cys203 is coil 1B. A linker 12 region spans residues Gln204–Val219. Residues Asp220–Glu363 form a coil 2 region. The tail stretch occupies residues Asp364–Tyr404.

The protein belongs to the intermediate filament family. In terms of tissue distribution, expressed in the hair follicles.

The chain is Keratin, type I cuticular Ha3-I (KRT33A) from Homo sapiens (Human).